Consider the following 358-residue polypeptide: DnaJ homolog subfamily B member 11 (358 aa).

A signal peptide spans M1–A22. Residues D25–G90 form the J domain. The residue at position 188 (T188) is a Phosphothreonine. A glycan (N-linked (GlcNAc...) asparagine) is linked at N261.

In terms of assembly, part of a large chaperone multiprotein complex comprising DNAJB11, HSP90B1, HSPA5, HYOU, PDIA2, PDIA4, PDIA6, PPIB, SDF2L1, UGGT1 and very small amounts of ERP29, but not, or at very low levels, CALR nor CANX. Binds to denatured substrates in an ATP-independent manner. Interacts via the J domain with HSPA5 in an ATP-dependent manner. In terms of processing, contains high-mannose Endo H-sensitive carbohydrates. Cys-169, Cys-171, Cys-193 and Cys-196 form intramolecular disulfide bonds. The preferential partner for each Cys is not known.

It is found in the endoplasmic reticulum lumen. Functionally, as a co-chaperone for HSPA5 it is required for proper folding, trafficking or degradation of proteins. Binds directly to both unfolded proteins that are substrates for ERAD and nascent unfolded peptide chains, but dissociates from the HSPA5-unfolded protein complex before folding is completed. May help recruiting HSPA5 and other chaperones to the substrate. Stimulates HSPA5 ATPase activity. It is necessary for maturation and correct trafficking of PKD1. The protein is DnaJ homolog subfamily B member 11 (Dnajb11) of Rattus norvegicus (Rat).